The following is a 192-amino-acid chain: Nucleoside triphosphate pyrophosphatase (192 aa).

The Proton acceptor role is filled by Asp73.

The protein belongs to the Maf family. A divalent metal cation serves as cofactor.

The protein resides in the cytoplasm. It catalyses the reaction a ribonucleoside 5'-triphosphate + H2O = a ribonucleoside 5'-phosphate + diphosphate + H(+). The enzyme catalyses a 2'-deoxyribonucleoside 5'-triphosphate + H2O = a 2'-deoxyribonucleoside 5'-phosphate + diphosphate + H(+). Nucleoside triphosphate pyrophosphatase. May have a dual role in cell division arrest and in preventing the incorporation of modified nucleotides into cellular nucleic acids. This chain is Nucleoside triphosphate pyrophosphatase, found in Ehrlichia ruminantium (strain Welgevonden).